Here is a 102-residue protein sequence, read N- to C-terminus: Small ribosomal subunit protein uS10 (102 aa).

The protein belongs to the universal ribosomal protein uS10 family. In terms of assembly, part of the 30S ribosomal subunit.

In terms of biological role, involved in the binding of tRNA to the ribosomes. This chain is Small ribosomal subunit protein uS10, found in Desulfitobacterium hafniense (strain DSM 10664 / DCB-2).